Consider the following 207-residue polypeptide: Large ribosomal subunit protein bL25 (207 aa).

The segment at 186–207 (SKPRGGAGAEGEADAEGEAAAE) is disordered. Positions 196–207 (GEADAEGEAAAE) are enriched in acidic residues.

This sequence belongs to the bacterial ribosomal protein bL25 family. CTC subfamily. Part of the 50S ribosomal subunit; part of the 5S rRNA/L5/L18/L25 subcomplex. Contacts the 5S rRNA. Binds to the 5S rRNA independently of L5 and L18.

Functionally, this is one of the proteins that binds to the 5S RNA in the ribosome where it forms part of the central protuberance. The sequence is that of Large ribosomal subunit protein bL25 from Methylobacillus flagellatus (strain ATCC 51484 / DSM 6875 / VKM B-1610 / KT).